A 302-amino-acid chain; its full sequence is Sulfate adenylyltransferase subunit 2 (302 aa).

It belongs to the PAPS reductase family. CysD subfamily. As to quaternary structure, heterodimer composed of CysD, the smaller subunit, and CysN.

The catalysed reaction is sulfate + ATP + H(+) = adenosine 5'-phosphosulfate + diphosphate. It participates in sulfur metabolism; hydrogen sulfide biosynthesis; sulfite from sulfate: step 1/3. Functionally, with CysN forms the ATP sulfurylase (ATPS) that catalyzes the adenylation of sulfate producing adenosine 5'-phosphosulfate (APS) and diphosphate, the first enzymatic step in sulfur assimilation pathway. APS synthesis involves the formation of a high-energy phosphoric-sulfuric acid anhydride bond driven by GTP hydrolysis by CysN coupled to ATP hydrolysis by CysD. The polypeptide is Sulfate adenylyltransferase subunit 2 (Shigella dysenteriae serotype 1 (strain Sd197)).